We begin with the raw amino-acid sequence, 249 residues long: ATP synthase subunit a, chloroplastic (249 aa).

Helical transmembrane passes span 38–58, 97–117, 136–156, 201–221, and 222–242; these read AQVLITSWIVIAILLSLAVLA, VPFIGTMFLFIFVSNWSGALL, INTTVALALLTSVAYFYAGLH, LVVAVLISLVPLVVPIPMMFL, and GLFTSAIQALIFATLAAAYIG.

The protein belongs to the ATPase A chain family. As to quaternary structure, F-type ATPases have 2 components, CF(1) - the catalytic core - and CF(0) - the membrane proton channel. CF(1) has five subunits: alpha(3), beta(3), gamma(1), delta(1), epsilon(1). CF(0) has four main subunits: a, b, b' and c.

The protein resides in the plastid. Its subcellular location is the chloroplast thylakoid membrane. Key component of the proton channel; it plays a direct role in the translocation of protons across the membrane. The sequence is that of ATP synthase subunit a, chloroplastic from Physcomitrium patens (Spreading-leaved earth moss).